The primary structure comprises 305 residues: Aspartate carbamoyltransferase catalytic subunit (305 aa).

Positions 56 and 57 each coordinate carbamoyl phosphate. L-aspartate is bound at residue K85. Positions 106, 134, and 137 each coordinate carbamoyl phosphate. Residues R167 and R227 each contribute to the L-aspartate site. L266 and P267 together coordinate carbamoyl phosphate.

Belongs to the aspartate/ornithine carbamoyltransferase superfamily. ATCase family. As to quaternary structure, heterooligomer of catalytic and regulatory chains.

The enzyme catalyses carbamoyl phosphate + L-aspartate = N-carbamoyl-L-aspartate + phosphate + H(+). The protein operates within pyrimidine metabolism; UMP biosynthesis via de novo pathway; (S)-dihydroorotate from bicarbonate: step 2/3. Catalyzes the condensation of carbamoyl phosphate and aspartate to form carbamoyl aspartate and inorganic phosphate, the committed step in the de novo pyrimidine nucleotide biosynthesis pathway. This Thermoplasma volcanium (strain ATCC 51530 / DSM 4299 / JCM 9571 / NBRC 15438 / GSS1) protein is Aspartate carbamoyltransferase catalytic subunit.